Here is a 283-residue protein sequence, read N- to C-terminus: Pseudokinase OPG198 (283 aa).

The ATP site is built by methionine 1 and lysine 30. Residues 1 to 283 (MESFKYCFDN…DRLRRLFIQD (283 aa)) enclose the Protein kinase domain.

Belongs to the protein kinase superfamily. Ser/Thr protein kinase family. Poxviruses subfamily. As to quaternary structure, interacts with B1/VPK1. Interacts with host VRK1. Interacts with host VRK2.

The protein localises to the host nucleus. Both catalytically active kinases B1/VPK1 and host VRK2 repress B12 inhibitory activity in a B1/VPK1 deletion mutant strain. In terms of biological role, pseudokinase that plays a role in viral DNA replication repression by activating the antiviral protein BANF1 and inhibiting the activity of host VRK1, a cellular modulator of BANF1. The sequence is that of Pseudokinase OPG198 (OPG198) from Homo sapiens (Human).